The chain runs to 110 residues: CHH-like protein (110 aa).

A signal peptide spans 1–23; that stretch reads MHLSSVQFAWAALVALAVSAAGA. A propeptide spanning residues 24-35 is cleaved from the precursor; that stretch reads LPSSAPHHVERR. 3 cysteine pairs are disulfide-bonded: Cys-42-Cys-78, Cys-58-Cys-74, and Cys-61-Cys-87. Valine amide is present on Val-107.

This sequence belongs to the arthropod CHH/MIH/GIH/VIH hormone family.

It is found in the secreted. The sequence is that of CHH-like protein (CHHL) from Bombyx mori (Silk moth).